The following is a 348-amino-acid chain: Anthranilate phosphoribosyltransferase (348 aa).

5-phospho-alpha-D-ribose 1-diphosphate is bound by residues glycine 93, 96–97 (GD), threonine 101, 103–106 (NVST), 121–129 (KHGNRAVSS), and serine 133. An anthranilate-binding site is contributed by glycine 93. Serine 105 provides a ligand contact to Mg(2+). Asparagine 124 serves as a coordination point for anthranilate. Position 179 (arginine 179) interacts with anthranilate. Mg(2+)-binding residues include aspartate 238 and glutamate 239.

It belongs to the anthranilate phosphoribosyltransferase family. Homodimer. It depends on Mg(2+) as a cofactor.

The enzyme catalyses N-(5-phospho-beta-D-ribosyl)anthranilate + diphosphate = 5-phospho-alpha-D-ribose 1-diphosphate + anthranilate. It participates in amino-acid biosynthesis; L-tryptophan biosynthesis; L-tryptophan from chorismate: step 2/5. Functionally, catalyzes the transfer of the phosphoribosyl group of 5-phosphorylribose-1-pyrophosphate (PRPP) to anthranilate to yield N-(5'-phosphoribosyl)-anthranilate (PRA). This Desulfotalea psychrophila (strain LSv54 / DSM 12343) protein is Anthranilate phosphoribosyltransferase.